Consider the following 634-residue polypeptide: Dachshund homolog 2 (634 aa).

Residues 76 to 162 (RMVDMHGVKV…LITRKDFETL (87 aa)) are DACHbox-N. Disordered regions lie at residues 171-194 (RKRQMTRKQAVNSSRPGRPPKRSL), 244-286 (LQGN…SGPQ), and 378-416 (IPESPSPAPSLEESHRPGSQTSSHPSSSVSSSPSQMDHH). Residues 244–269 (LQGNGSQNGTESEPDDLNSTTGGSES) show a composition bias toward polar residues. A compositionally biased stretch (low complexity) spans 396–412 (SQTSSHPSSSVSSSPSQ). Residues 488 to 568 (SSVETLLTNI…KAKRKLQEAL (81 aa)) form a DACHbox-C region. Residues 494-588 (LTNIQGLLKV…EQALKQATSG (95 aa)) are a coiled coil.

It belongs to the DACH/dachshund family. In terms of assembly, interacts with SIX6. Interacts with EYA2. Expressed in embryo, and at lower levels in the newborn.

It is found in the nucleus. Functionally, transcription factor that is involved in regulation of organogenesis. Seems to be a regulator for SIX1 and SIX6. Seems to act as a corepressor of SIX6 in regulating proliferation by directly repressing cyclin-dependent kinase inhibitors, including the p27Kip1 promoter. Is recruited with SIX6 to the p27Kip1 promoter in embryonal retina. SIX6 corepression also seems to involve NCOR1, TBL1, HDAC1 and HDAC3. May be involved together with PAX3, SIX1, and EYA2 in regulation of myogenesis. In the developing somite, expression of DACH2 and PAX3 is regulated by the overlying ectoderm, and DACH2 and PAX3 positively regulate each other's expression. Probably binds to DNA via its DACHbox-N domain. In Mus musculus (Mouse), this protein is Dachshund homolog 2 (Dach2).